A 160-amino-acid chain; its full sequence is Transcription elongation factor GreA (160 aa).

The stretch at 2–84 (KNTVNDKILL…SKAKIIKADL (83 aa)) forms a coiled coil.

This sequence belongs to the GreA/GreB family.

Necessary for efficient RNA polymerase transcription elongation past template-encoded arresting sites. The arresting sites in DNA have the property of trapping a certain fraction of elongating RNA polymerases that pass through, resulting in locked ternary complexes. Cleavage of the nascent transcript by cleavage factors such as GreA or GreB allows the resumption of elongation from the new 3'terminus. GreA releases sequences of 2 to 3 nucleotides. The protein is Transcription elongation factor GreA of Mesomycoplasma hyopneumoniae (strain 232) (Mycoplasma hyopneumoniae).